The chain runs to 327 residues: uncharacterized protein (327 aa).

A signal peptide spans 1 to 23; the sequence is MGGGRLPPLWLPLLIAWSEWGNC. N-linked (GlcNAc...) asparagine; by host glycosylation is found at Asn-144 and Asn-239. Residues 298–327 form a disordered region; the sequence is EESEAAEETAAGEASAVAAAAVSEEEQRRE. Over residues 305 to 319 the composition is skewed to low complexity; the sequence is ETAAGEASAVAAAAV.

This is an uncharacterized protein from Human cytomegalovirus (strain AD169) (HHV-5).